Reading from the N-terminus, the 491-residue chain is Probable malate:quinone oxidoreductase (491 aa).

The protein belongs to the MQO family. FAD is required as a cofactor.

The enzyme catalyses (S)-malate + a quinone = a quinol + oxaloacetate. The protein operates within carbohydrate metabolism; tricarboxylic acid cycle; oxaloacetate from (S)-malate (quinone route): step 1/1. This is Probable malate:quinone oxidoreductase from Leifsonia xyli subsp. xyli (strain CTCB07).